A 500-amino-acid polypeptide reads, in one-letter code: Amino-acid acetyltransferase, mitochondrial (500 aa).

The N-terminal 19 residues, 1-19 (MQKPSLSQDLIWILKSVQS), are a transit peptide targeting the mitochondrion. An N-acetyltransferase domain is found at 336-496 (FLGPKCLTDG…YMSVIDKIQP (161 aa)).

It belongs to the acetyltransferase family.

The protein localises to the mitochondrion. The enzyme catalyses L-glutamate + acetyl-CoA = N-acetyl-L-glutamate + CoA + H(+). It functions in the pathway amino-acid biosynthesis; L-arginine biosynthesis; N(2)-acetyl-L-ornithine from L-glutamate: step 1/4. Functionally, N-acetylglutamate synthase involved in arginine biosynthesis. The polypeptide is Amino-acid acetyltransferase, mitochondrial (arg6) (Schizosaccharomyces pombe (strain 972 / ATCC 24843) (Fission yeast)).